The following is a 679-amino-acid chain: Methionine--tRNA ligase (679 aa).

Positions 15-25 (PYANGPVHIGH) match the 'HIGH' region motif. Cys147, Cys150, Cys160, and Cys163 together coordinate Zn(2+). The 'KMSKS' region signature appears at 332–336 (KISTS). Thr335 lines the ATP pocket. In terms of domain architecture, tRNA-binding spans 578 to 679 (DFMKLDIRVG…KEVKPGSEVK (102 aa)).

The protein belongs to the class-I aminoacyl-tRNA synthetase family. MetG type 1 subfamily. As to quaternary structure, homodimer. Zn(2+) is required as a cofactor.

The protein resides in the cytoplasm. It carries out the reaction tRNA(Met) + L-methionine + ATP = L-methionyl-tRNA(Met) + AMP + diphosphate. Its function is as follows. Is required not only for elongation of protein synthesis but also for the initiation of all mRNA translation through initiator tRNA(fMet) aminoacylation. The chain is Methionine--tRNA ligase from Parabacteroides distasonis (strain ATCC 8503 / DSM 20701 / CIP 104284 / JCM 5825 / NCTC 11152).